A 154-amino-acid polypeptide reads, in one-letter code: uncharacterized protein (154 aa).

The 137-residue stretch at 7–143 (RSELEKTAVQ…IFSFVGKAAD (137 aa)) folds into the HTH marR-type domain. Positions 57–80 (AGELGKKTGLSTGSVTALVDRLEK) form a DNA-binding region, H-T-H motif.

This is an uncharacterized protein from Bacillus subtilis (strain 168).